The sequence spans 206 residues: MARRKNHSIKIENNEKENQILVSLSIVALLGGCSEEQVQRDVYQSLDDCLADWKKIELCEADKNTESTQKTATTQQQGLGLNIRDNGNAESAVKNPAENNAQANQSENRAESTTKAESTDPSLGAAIAGGVIGYMAARAISSFLGPSYHPGNRAVTTPTGQVVQPQTNRSVGKPMLVKGNAGSMNSKPVSRGGFSSPNKTHRSSGG.

Disordered stretches follow at residues 64–123 and 155–206; these read NTES…DPSL and VTTP…SSGG. The span at 66–79 shows a compositional bias: polar residues; the sequence is ESTQKTATTQQQGL. The segment covering 97–107 has biased composition (low complexity); the sequence is AENNAQANQSE. Over residues 108–118 the composition is skewed to basic and acidic residues; sequence NRAESTTKAES. The segment covering 155–167 has biased composition (low complexity); the sequence is VTTPTGQVVQPQT. Positions 182–198 are enriched in polar residues; sequence GSMNSKPVSRGGFSSPN.

This is an uncharacterized protein from Haemophilus influenzae (strain ATCC 51907 / DSM 11121 / KW20 / Rd).